The primary structure comprises 249 residues: INO80 complex subunit 1 (249 aa).

C2H2-type zinc fingers lie at residues tyrosine 73–histidine 100 and phenylalanine 106–histidine 131.

In terms of assembly, component of the INO80 chromatin remodeling complex.

The protein localises to the nucleus. It is found in the cytoplasm. Functionally, component of the INO80 complex which remodels chromatin by shifting nucleosomes and is involved in DNA repair. In Schizosaccharomyces pombe (strain 972 / ATCC 24843) (Fission yeast), this protein is INO80 complex subunit 1 (iec1).